Reading from the N-terminus, the 320-residue chain is Malate dehydrogenase (320 aa).

NAD(+) is bound by residues 10–15 (GSGMIG) and D34. Substrate is bound by residues R83 and R89. Residues N96 and 119–121 (ITN) each bind NAD(+). Substrate contacts are provided by N121 and R152. H176 (proton acceptor) is an active-site residue.

Belongs to the LDH/MDH superfamily. MDH type 3 family.

It carries out the reaction (S)-malate + NAD(+) = oxaloacetate + NADH + H(+). Catalyzes the reversible oxidation of malate to oxaloacetate. This Bartonella henselae (strain ATCC 49882 / DSM 28221 / CCUG 30454 / Houston 1) (Rochalimaea henselae) protein is Malate dehydrogenase.